A 382-amino-acid polypeptide reads, in one-letter code: MVNFVSLCDIKYGFVPKNSTDLFVKRKIHKLPSRGDVITRLPVFGSNARENLNAKPRRNLRVRPIFCKSYGDAAKVYQEEEIPRAKLIWRAIKLPMYSVALVPLTVGASAAYLETGLFLARRYVTLLLSSILIITWLNLSNDVYDFDTGADKNKMESVVNLVGSRTGTLAAAITSLALGVSGLVWTSLNASNIRAILLLASAILCGYVYQCPPFRLSYQGLGEPLCFAAFGPFATTAFYLLLGSSSEMRHLPLSGRVLSSSVLVGFTTSLILFCSHFHQVDGDLAVGKYSPLVRLGTEKGAFVVRWTIRLLYSMLLVLGLTRILPLPCTLMCFLTLPVGNLVSSYVEKHHKDNGKIFMAKYYCVRLHALLGAALSLGLVIAR.

A chloroplast-targeting transit peptide spans 1 to 66; that stretch reads MVNFVSLCDI…RRNLRVRPIF (66 aa). Transmembrane regions (helical) follow at residues 99–119, 123–143, 168–188, 196–216, 224–244, 257–277, 323–343, and 361–381; these read VALV…GLFL, YVTL…SNDV, TLAA…WTSL, ILLL…PFRL, PLCF…LLGS, VLSS…CSHF, ILPL…NLVS, and YYCV…LVIA.

It belongs to the MenA family. Type 2 subfamily.

The protein resides in the plastid. The protein localises to the chloroplast membrane. The enzyme catalyses 2-carboxy-1,4-naphthoquinone + phytyl diphosphate + H(+) = demethylphylloquinone + CO2 + diphosphate. In terms of biological role, involved in the synthesis of phylloquinone (vitamin K1). Catalyzes the transfer of a prenyl chain to 2-carboxy-1,4-naphthoquinone. The sequence is that of 2-carboxy-1,4-naphthoquinone phytyltransferase, chloroplastic (ABC4) from Arabidopsis thaliana (Mouse-ear cress).